The primary structure comprises 220 residues: uncharacterized protein (220 aa).

This is an uncharacterized protein from Archaeoglobus fulgidus (strain ATCC 49558 / DSM 4304 / JCM 9628 / NBRC 100126 / VC-16).